Consider the following 315-residue polypeptide: Ferrochelatase (315 aa).

Fe cation-binding residues include histidine 193 and glutamate 273.

The protein belongs to the ferrochelatase family.

The protein localises to the cytoplasm. It catalyses the reaction heme b + 2 H(+) = protoporphyrin IX + Fe(2+). It functions in the pathway porphyrin-containing compound metabolism; protoheme biosynthesis; protoheme from protoporphyrin-IX: step 1/1. Catalyzes the ferrous insertion into protoporphyrin IX. The polypeptide is Ferrochelatase (Wolbachia pipientis wMel).